The following is a 109-amino-acid chain: Nucleoid-associated protein HAPS_1040 (109 aa).

Positions 1–21 (MFGKGGLGGLMKQAQQMQERM) are disordered. A compositionally biased stretch (low complexity) spans 10–19 (LMKQAQQMQE).

This sequence belongs to the YbaB/EbfC family. Homodimer.

It is found in the cytoplasm. The protein localises to the nucleoid. Its function is as follows. Binds to DNA and alters its conformation. May be involved in regulation of gene expression, nucleoid organization and DNA protection. The chain is Nucleoid-associated protein HAPS_1040 from Glaesserella parasuis serovar 5 (strain SH0165) (Haemophilus parasuis).